The following is a 424-amino-acid chain: Solute carrier family 67 member A1 (424 aa).

A run of 10 helical transmembrane segments spans residues 26–46, 59–79, 90–110, 156–176, 184–204, 243–263, 276–296, 312–332, 334–354, and 391–411; these read ILLT…QFSI, IAFG…GPVF, AALT…AAAS, LGLC…TLVS, AILA…CIPA, IFLV…MFSI, AGYL…LVIG, VLVF…FHFC, LVPG…SMLI, and FGVP…LLVL.

This sequence belongs to the major facilitator (TC 2.A.1) superfamily. Organic cation transporter (TC 2.A.1.19) family. Interacts with RNF167. As to expression, expressed at high levels in adult and fetal kidney and liver, and adult colon. Expressed in fetal renal proximal tubules (at protein level). Expressed at lower levels in heart, brain and lung.

The protein resides in the apical cell membrane. Functionally, may act as a transporter of organic cations based on a proton efflux antiport mechanism. May play a role in the transport of chloroquine and quinidine-related compounds in kidney. Plays a role in the regulation of lipid metabolism. In Homo sapiens (Human), this protein is Solute carrier family 67 member A1.